The following is a 37-amino-acid chain: Brevinin-2DYe (37 aa).

Cys-31 and Cys-37 are disulfide-bonded.

Expressed by the skin glands.

The protein resides in the secreted. Its function is as follows. Antimicrobial peptide. Active against the Gram-positive bacterium S.aureus (MIC=15 uM) and the Gram-negative bacterium E.coli (MIC=30 uM). The polypeptide is Brevinin-2DYe (Rana dybowskii (Dybovsky's frog)).